Consider the following 1292-residue polypeptide: Putative late blight resistance protein homolog R1C-3 (1292 aa).

Coiled-coil stretches lie at residues 394–414 (DSLA…ESMQ) and 505–526 (RMNE…KLLN). Positions 505–792 (RMNEEIVGFE…SESFVKSCEG (288 aa)) constitute an NB-ARC domain. 538 to 545 (GMPGLGKT) is a binding site for ATP. LRR repeat units lie at residues 842–865 (AEEN…VYSH), 920–944 (FKFL…LFYL), 963–991 (LWNL…VWDM), 1066–1089 (PIRL…CISA), 1094–1113 (YLEL…TADH), 1114–1142 (LKHL…MFPQ), and 1163–1187 (FPNL…FMDI). The HMA domain occupies 1211-1278 (ETQVEDNQNT…KLRNVAYADE (68 aa)).

The protein belongs to the disease resistance NB-LRR family.

It localises to the cytoplasm. The protein localises to the membrane. In terms of biological role, confers resistance to late blight (Phytophthora infestans) races carrying the avirulence gene Avr1. Resistance proteins guard the plant against pathogens that contain an appropriate avirulence protein via an indirect interaction with this avirulence protein. That triggers a defense system including the hypersensitive response, which restricts the pathogen growth. In Solanum demissum (Wild potato), this protein is Putative late blight resistance protein homolog R1C-3 (R1C-3).